The primary structure comprises 84 residues: Conotoxin Am6.1 (84 aa).

A signal peptide spans 1–19 (MEKLTILLLVAAVLMSTHA). A propeptide spanning residues 20-47 (MFQGGGEKSRKAINFSETRKLARNKQKR) is cleaved from the precursor. Cystine bridges form between C48–C62, C55–C66, and C61–C71. 6'-bromotryptophan; in Am6.1b is present on W51. E60 and E64 each carry 4-carboxyglutamate; partial; in Am6.1b and Am6.1c. Positions 78-84 (RTTSHPI) are excised as a propeptide.

This sequence belongs to the conotoxin O2 family. In terms of processing, three forms of this peptides have been described. The unmodified Am6.1a (Am3286) is not detected in the venom; Am6.1b (Am3408) is only Trp brominated, while Am6.1c (Am3452) is both Trp brominated and Glu gamma-carboxyglutamated. Both Am6.1b and Am6.1c are detected in the venom. In terms of tissue distribution, expressed by the venom duct.

It localises to the secreted. Its function is as follows. Gamma-conotoxins may act on voltage-gated non-specific cation pacemaker channels (HCN). The chain is Conotoxin Am6.1 from Conus amadis (Amadis cone).